A 177-amino-acid chain; its full sequence is Ribosome maturation factor RimM (177 aa).

The 74-residue stretch at 98–171 folds into the PRC barrel domain; sequence GETIFLSEIK…AVVMDLPEGL (74 aa).

Belongs to the RimM family. Binds ribosomal protein uS19.

Its subcellular location is the cytoplasm. An accessory protein needed during the final step in the assembly of 30S ribosomal subunit, possibly for assembly of the head region. Essential for efficient processing of 16S rRNA. May be needed both before and after RbfA during the maturation of 16S rRNA. It has affinity for free ribosomal 30S subunits but not for 70S ribosomes. The polypeptide is Ribosome maturation factor RimM (Bdellovibrio bacteriovorus (strain ATCC 15356 / DSM 50701 / NCIMB 9529 / HD100)).